Here is a 386-residue protein sequence, read N- to C-terminus: Patatin-T5 (386 aa).

An N-terminal signal peptide occupies residues methionine 1–alanine 23. Positions leucine 32–isoleucine 229 constitute a PNPLA domain. A GXGXXG motif is present at residues glycine 36 to glycine 41. The N-linked (GlcNAc...) asparagine glycan is linked to asparagine 60. A GXSXG motif is present at residues glycine 75 to glycine 79. The active-site Nucleophile is serine 77. Residues asparagine 90 and asparagine 202 are each glycosylated (N-linked (GlcNAc...) asparagine). The active-site Proton acceptor is the aspartate 215. The short motif at aspartate 215–alanine 217 is the DGA/G element.

The protein belongs to the patatin family. Post-translationally, N-glycosylated. Tuber and stolon.

The protein localises to the vacuole. Functionally, probable lipolytic acyl hydrolase (LAH), an activity which is thought to be involved in the response of tubers to pathogens. In Solanum tuberosum (Potato), this protein is Patatin-T5.